The chain runs to 109 residues: T cell receptor alpha variable 26-2 (109 aa).

The signal sequence occupies residues 1–19; sequence MKLVTSITVLLSLGIMGDA. Residues 20–109 form the Ig-like domain; the sequence is KTTQPNSMES…AAVYYCILRD (90 aa). Cys-39 and Cys-105 are joined by a disulfide. Asn-40 carries N-linked (GlcNAc...) asparagine glycosylation.

Alpha-beta TR is a heterodimer composed of an alpha and beta chain; disulfide-linked. The alpha-beta TR is associated with the transmembrane signaling CD3 coreceptor proteins to form the TR-CD3 (TcR or TCR). The assembly of alpha-beta TR heterodimers with CD3 occurs in the endoplasmic reticulum where a single alpha-beta TR heterodimer associates with one CD3D-CD3E heterodimer, one CD3G-CD3E heterodimer and one CD247 homodimer forming a stable octameric structure. CD3D-CD3E and CD3G-CD3E heterodimers preferentially associate with TR alpha and TR beta chains, respectively. The association of the CD247 homodimer is the last step of TcR assembly in the endoplasmic reticulum and is required for transport to the cell surface.

It localises to the cell membrane. Functionally, v region of the variable domain of T cell receptor (TR) alpha chain that participates in the antigen recognition. Alpha-beta T cell receptors are antigen specific receptors which are essential to the immune response and are present on the cell surface of T lymphocytes. Recognize peptide-major histocompatibility (MH) (pMH) complexes that are displayed by antigen presenting cells (APC), a prerequisite for efficient T cell adaptive immunity against pathogens. Binding of alpha-beta TR to pMH complex initiates TR-CD3 clustering on the cell surface and intracellular activation of LCK that phosphorylates the ITAM motifs of CD3G, CD3D, CD3E and CD247 enabling the recruitment of ZAP70. In turn ZAP70 phosphorylates LAT, which recruits numerous signaling molecules to form the LAT signalosome. The LAT signalosome propagates signal branching to three major signaling pathways, the calcium, the mitogen-activated protein kinase (MAPK) kinase and the nuclear factor NF-kappa-B (NF-kB) pathways, leading to the mobilization of transcription factors that are critical for gene expression and essential for T cell growth and differentiation. The T cell repertoire is generated in the thymus, by V-(D)-J rearrangement. This repertoire is then shaped by intrathymic selection events to generate a peripheral T cell pool of self-MH restricted, non-autoaggressive T cells. Post-thymic interaction of alpha-beta TR with the pMH complexes shapes TR structural and functional avidity. The protein is T cell receptor alpha variable 26-2 of Homo sapiens (Human).